The primary structure comprises 154 residues: MAVKKILLLNGPNLNLLGTREPHIYGYDTLASIESSLTTYLSSLTPSVTLLSFQTNWEGALIDRIHEARTDGTDAIVINPGAFTHYSIALRDALTGVDIPFVEVHISNVHKREEFRHKSFLSDKAEAVICGLGVYGYRAAVEWCVGYLKEKPKA.

Tyr25 serves as the catalytic Proton acceptor. 3 residues coordinate substrate: Asn79, His85, and Asp92. The Proton donor role is filled by His105. Residues 106 to 107 and Arg116 contribute to the substrate site; that span reads IS.

Belongs to the type-II 3-dehydroquinase family. As to quaternary structure, homododecamer. Adopts a ring-like structure, composed of an arrangement of two hexameric rings stacked on top of one another.

The catalysed reaction is 3-dehydroquinate = 3-dehydroshikimate + H2O. It participates in aromatic compound metabolism; 3,4-dihydroxybenzoate biosynthesis; 3,4-dihydroxybenzoate from 3-dehydroquinate: step 1/2. Its function is as follows. Is involved in the catabolism of quinate. Allows the utilization of quinate as carbon source via the beta-ketoadipate pathway. This is Catabolic 3-dehydroquinase from Botryotinia fuckeliana (strain B05.10) (Noble rot fungus).